The following is a 1457-amino-acid chain: DNA-directed RNA polymerase III subunit RPC1 (1457 aa).

Zn(2+) is bound by residues Cys-67, Cys-70, Cys-77, His-80, Cys-107, Cys-110, and Cys-154. Positions 508, 510, and 512 each coordinate Mg(2+). The bridging helix stretch occupies residues 854-866 (PPEFLFHSISGRE).

The protein belongs to the RNA polymerase beta' chain family. As to quaternary structure, component of the RNA polymerase III (Pol III) complex consisting of 17 subunits.

It localises to the nucleus. It carries out the reaction RNA(n) + a ribonucleoside 5'-triphosphate = RNA(n+1) + diphosphate. In terms of biological role, DNA-dependent RNA polymerase catalyzes the transcription of DNA into RNA using the four ribonucleoside triphosphates as substrates. Largest and catalytic core component of RNA polymerase III which synthesizes small RNAs, such as 5S rRNA and tRNAs. Forms the polymerase active center together with the second largest subunit. A single-stranded DNA template strand of the promoter is positioned within the central active site cleft of Pol III. A bridging helix emanates from RPC1 and crosses the cleft near the catalytic site and is thought to promote translocation of Pol III by acting as a ratchet that moves the RNA-DNA hybrid through the active site by switching from straight to bent conformations at each step of nucleotide addition. The chain is DNA-directed RNA polymerase III subunit RPC1 (RPC1) from Debaryomyces hansenii (strain ATCC 36239 / CBS 767 / BCRC 21394 / JCM 1990 / NBRC 0083 / IGC 2968) (Yeast).